The chain runs to 464 residues: Siroheme synthase (464 aa).

The segment at 1-203 (MKYLPLFHNL…GQGAEAERLL (203 aa)) is precorrin-2 dehydrogenase /sirohydrochlorin ferrochelatase. NAD(+)-binding positions include 22-23 (EI) and 43-44 (PE). At Ser-128 the chain carries Phosphoserine. Residues 216-464 (GEVYLVGAGP…AWFEGAQGQI (249 aa)) are uroporphyrinogen-III C-methyltransferase. Position 225 (Pro-225) interacts with S-adenosyl-L-methionine. Catalysis depends on Asp-248, which acts as the Proton acceptor. Lys-270 acts as the Proton donor in catalysis. S-adenosyl-L-methionine is bound by residues 301–303 (GGD), Ile-306, 331–332 (TA), Met-383, and Gly-412.

The protein in the N-terminal section; belongs to the precorrin-2 dehydrogenase / sirohydrochlorin ferrochelatase family. This sequence in the C-terminal section; belongs to the precorrin methyltransferase family.

It carries out the reaction uroporphyrinogen III + 2 S-adenosyl-L-methionine = precorrin-2 + 2 S-adenosyl-L-homocysteine + H(+). It catalyses the reaction precorrin-2 + NAD(+) = sirohydrochlorin + NADH + 2 H(+). The catalysed reaction is siroheme + 2 H(+) = sirohydrochlorin + Fe(2+). The protein operates within cofactor biosynthesis; adenosylcobalamin biosynthesis; precorrin-2 from uroporphyrinogen III: step 1/1. It participates in cofactor biosynthesis; adenosylcobalamin biosynthesis; sirohydrochlorin from precorrin-2: step 1/1. It functions in the pathway porphyrin-containing compound metabolism; siroheme biosynthesis; precorrin-2 from uroporphyrinogen III: step 1/1. Its pathway is porphyrin-containing compound metabolism; siroheme biosynthesis; siroheme from sirohydrochlorin: step 1/1. The protein operates within porphyrin-containing compound metabolism; siroheme biosynthesis; sirohydrochlorin from precorrin-2: step 1/1. Its function is as follows. Multifunctional enzyme that catalyzes the SAM-dependent methylations of uroporphyrinogen III at position C-2 and C-7 to form precorrin-2 via precorrin-1. Then it catalyzes the NAD-dependent ring dehydrogenation of precorrin-2 to yield sirohydrochlorin. Finally, it catalyzes the ferrochelation of sirohydrochlorin to yield siroheme. The chain is Siroheme synthase from Pseudomonas fluorescens (strain Pf0-1).